The following is a 191-amino-acid chain: Adenylate kinase (191 aa).

Gly-10–Thr-15 serves as a coordination point for ATP. The interval Ser-30–Val-59 is NMP. Residues Thr-31, Arg-36, Glu-57–Val-59, Gly-85–Arg-88, and Gln-92 contribute to the AMP site. Residues Gln-126 to Asp-136 form an LID region. Arg-127 contacts ATP. AMP contacts are provided by Arg-133 and Arg-144. ATP is bound at residue Gly-172.

The protein belongs to the adenylate kinase family. As to quaternary structure, monomer.

The protein resides in the cytoplasm. The enzyme catalyses AMP + ATP = 2 ADP. It participates in purine metabolism; AMP biosynthesis via salvage pathway; AMP from ADP: step 1/1. Its function is as follows. Catalyzes the reversible transfer of the terminal phosphate group between ATP and AMP. Plays an important role in cellular energy homeostasis and in adenine nucleotide metabolism. The chain is Adenylate kinase from Nocardioides sp. (strain ATCC BAA-499 / JS614).